Here is a 100-residue protein sequence, read N- to C-terminus: Small ribosomal subunit protein uS14c (100 aa).

The protein belongs to the universal ribosomal protein uS14 family. Part of the 30S ribosomal subunit.

The protein localises to the plastid. The protein resides in the chloroplast. Binds 16S rRNA, required for the assembly of 30S particles. The chain is Small ribosomal subunit protein uS14c from Angiopteris evecta (Mule's foot fern).